Here is a 322-residue protein sequence, read N- to C-terminus: Solute carrier family 25 member 16 (322 aa).

3 Solcar repeats span residues 34–120 (FYWL…YKTF), 128–219 (SGHV…LKSV), and 241–322 (LKTH…AVAF).

The protein belongs to the mitochondrial carrier (TC 2.A.29) family.

It localises to the mitochondrion inner membrane. Its function is as follows. May be involved in the transport of coenzyme A in the mitochondrial matrix. Very little is known about the physiological function of this carrier. The chain is Solute carrier family 25 member 16 from Rattus norvegicus (Rat).